The chain runs to 36 residues: Fructose-1,6-/sedoheptulose-1,7-bisphosphate aldolase (36 aa).

The chain is Fructose-1,6-/sedoheptulose-1,7-bisphosphate aldolase (cbbA) from Nitrobacter vulgaris.